A 191-amino-acid chain; its full sequence is Guanylate kinase (191 aa).

The 179-residue stretch at 10–188 (GQLIVLTGPS…ALHRLVKLIG (179 aa)) folds into the Guanylate kinase-like domain. ATP is bound at residue 17–24 (GPSGVGKG).

Belongs to the guanylate kinase family.

It is found in the cytoplasm. The enzyme catalyses GMP + ATP = GDP + ADP. In terms of biological role, essential for recycling GMP and indirectly, cGMP. The protein is Guanylate kinase (gmk) of Synechocystis sp. (strain ATCC 27184 / PCC 6803 / Kazusa).